The chain runs to 1496 residues: Synaptojanin-2 (1496 aa).

In terms of domain architecture, SAC spans 120–444 (LKKILSSGVF…GHSLSKVFTG (325 aa)). The RRM domain occupies 889 to 968 (DATVVVNLQS…RAVKIRPKTK (80 aa)). Disordered regions lie at residues 1027–1073 (NQPG…DDAD), 1085–1166 (GEFR…YNVK), 1190–1405 (ASEE…PEAA), and 1427–1473 (NTWL…KTLG). Residues 1101-1115 (RPRPPQPPQRPPPPT) are compositionally biased toward pro residues. Phosphoserine is present on residues Ser1124 and Ser1191. Residues 1124–1140 (SDASISSGTHGQYSILQ) are compositionally biased toward polar residues. Composition is skewed to pro residues over residues 1221–1235 (PQAPPLLPRRPPPRV) and 1319–1332 (VPPPLEAPPLVPKV). Low complexity predominate over residues 1340–1359 (APAAFHLQVLQSNSQLLQGL). Composition is skewed to polar residues over residues 1383–1394 (FLSTSSATSPDS) and 1427–1442 (NTWLSKSSDPLDSGTR).

This sequence belongs to the synaptojanin family. It in the central section; belongs to the inositol 1,4,5-trisphosphate 5-phosphatase family. Binds to GRB2. Isoform 2A binds to SYNJ2BP/OMP25. Isoform 2B2 C-terminal proline-rich region binds to a variety of SH3 domain-containing proteins including SH3GL1, SH3GL2, SH3GL3 and GRB2.

It localises to the cytoplasm. The protein resides in the cell membrane. It is found in the membrane raft. Its subcellular location is the presynapse. The protein localises to the cytoskeleton. The catalysed reaction is a 1,2-diacyl-sn-glycero-3-phospho-(1D-myo-inositol-4,5-bisphosphate) + H2O = a 1,2-diacyl-sn-glycero-3-phospho-(1D-myo-inositol 4-phosphate) + phosphate. In terms of biological role, inositol 5-phosphatase which may be involved in distinct membrane trafficking and signal transduction pathways. May mediate the inhibitory effect of Rac1 on endocytosis. This chain is Synaptojanin-2 (SYNJ2), found in Homo sapiens (Human).